Here is a 338-residue protein sequence, read N- to C-terminus: 6-phosphogluconolactonase (338 aa).

This sequence belongs to the cycloisomerase 2 family.

It carries out the reaction 6-phospho-D-glucono-1,5-lactone + H2O = 6-phospho-D-gluconate + H(+). It functions in the pathway carbohydrate degradation; pentose phosphate pathway; D-ribulose 5-phosphate from D-glucose 6-phosphate (oxidative stage): step 2/3. Functionally, catalyzes the hydrolysis of 6-phosphogluconolactone to 6-phosphogluconate. The chain is 6-phosphogluconolactonase from Blochmanniella floridana.